The sequence spans 190 residues: MNALHRIGAGTLLAVLLAFGLTGCGEKEEVQQSLEPVAFHDSDECHVCGMIITDFPGPKGQAVEKRGVKKFCSTAEMLGWWLQPENRLLDAKLYVHDMGRSVWEKPDDGHLIDATSAYYVVGTSLKGAMGASLASFAEEQDAKALAGMHGGRVLRFEEIDQALLQEAASMQHGGMHDHAPNGAHNAHAGH.

Positions 1-23 (MNALHRIGAGTLLAVLLAFGLTG) are cleaved as a signal peptide. Cys-24 carries N-palmitoyl cysteine lipidation. A lipid anchor (S-diacylglycerol cysteine) is attached at Cys-24. Residues 170–190 (MQHGGMHDHAPNGAHNAHAGH) are disordered. The segment covering 180–190 (PNGAHNAHAGH) has biased composition (low complexity).

This sequence belongs to the NosL family. Monomer.

The protein localises to the cell membrane. May act as a metallochaperone involved in nitrous oxide reductase assembly. Specifically binds Cu(+). This chain is Copper-binding lipoprotein NosL, found in Stutzerimonas stutzeri (Pseudomonas stutzeri).